Here is a 711-residue protein sequence, read N- to C-terminus: DNA ligase (711 aa).

NAD(+)-binding positions include 39 to 43 (DAEYD), 88 to 89 (SL), and E119. K121 acts as the N6-AMP-lysine intermediate in catalysis. Residues R142, E179, K295, and K319 each coordinate NAD(+). The Zn(2+) site is built by C416, C419, C434, and C440. Residues 630 to 711 (ESVSSLAGRA…LRELLAGAGA (82 aa)) form the BRCT domain.

Belongs to the NAD-dependent DNA ligase family. LigA subfamily. It depends on Mg(2+) as a cofactor. Mn(2+) serves as cofactor.

The catalysed reaction is NAD(+) + (deoxyribonucleotide)n-3'-hydroxyl + 5'-phospho-(deoxyribonucleotide)m = (deoxyribonucleotide)n+m + AMP + beta-nicotinamide D-nucleotide.. In terms of biological role, DNA ligase that catalyzes the formation of phosphodiester linkages between 5'-phosphoryl and 3'-hydroxyl groups in double-stranded DNA using NAD as a coenzyme and as the energy source for the reaction. It is essential for DNA replication and repair of damaged DNA. In Halorhodospira halophila (strain DSM 244 / SL1) (Ectothiorhodospira halophila (strain DSM 244 / SL1)), this protein is DNA ligase.